The primary structure comprises 309 residues: Protoheme IX farnesyltransferase (309 aa).

The next 9 helical transmembrane spans lie at 35 to 55 (IGIV…AFYF), 64 to 84 (LHLV…SCAI), 114 to 134 (VLWL…MTTV), 135 to 155 (TAAV…TLWT), 161 to 181 (INTV…WTAV), 187 to 207 (IVPL…FLAL), 231 to 251 (MTKR…FYLF), 253 to 273 (LGVP…LLGL), and 289 to 309 (FVYS…ATLW).

Belongs to the UbiA prenyltransferase family. Protoheme IX farnesyltransferase subfamily. Interacts with CtaA.

Its subcellular location is the cell membrane. It catalyses the reaction heme b + (2E,6E)-farnesyl diphosphate + H2O = Fe(II)-heme o + diphosphate. The protein operates within porphyrin-containing compound metabolism; heme O biosynthesis; heme O from protoheme: step 1/1. Functionally, converts heme B (protoheme IX) to heme O by substitution of the vinyl group on carbon 2 of heme B porphyrin ring with a hydroxyethyl farnesyl side group. The polypeptide is Protoheme IX farnesyltransferase (Geobacillus kaustophilus (strain HTA426)).